We begin with the raw amino-acid sequence, 358 residues long: MLERLNFIENKYEELSNKISDPSVMANQKEWQKLCKEHADLEIIVNTYREYKKAQEDLESDKEMLKEESDKDLREMAQEEIKELTLKLEDLERELTILLLPKDPNDDKDVFIEIRAGAGGEEAALFASNLLRMYTRYAERKNWKVETMSLNATDIGGFKEVTVAIKGKGAYSRLKYESGVHRVQRVPDTESSGRIHTSTATVAVLPEVDDVDININANDLRIDVYRASGHGGQCVNTTDSAVRITHLPTGLVVTCQDEKSQLKNKEKAMKVLKARLFEAAEAERAASIAEDRKSQVGTGDRSERIRTYNYPQGRITDHRIGLTLYKLETFLDGDIDEVIEALVTEDQAEKMKDLGRVN.

Gln-233 is subject to N5-methylglutamine.

The protein belongs to the prokaryotic/mitochondrial release factor family. Post-translationally, methylated by PrmC. Methylation increases the termination efficiency of RF1.

The protein localises to the cytoplasm. In terms of biological role, peptide chain release factor 1 directs the termination of translation in response to the peptide chain termination codons UAG and UAA. The protein is Peptide chain release factor 1 of Clostridium botulinum (strain 657 / Type Ba4).